A 102-amino-acid polypeptide reads, in one-letter code: Caroteno-chlorophyll a-c-binding protein (102 aa).

Residues E36 and H39 each coordinate chlorophyll a. The chain crosses the membrane as a helical span at residues 78–98; sequence VLGLIKIVPAGLWGIMIFYAA.

Belongs to the light-harvesting chlorophyll a/b-binding (LHC) protein family. In terms of assembly, the LHC complex consists of chlorophyll a-b binding proteins. Requires Binds at least 14 chlorophylls (8 Chl-a and 6 Chl-b) and carotenoids such as lutein and neoxanthin. as cofactor. Photoregulated by reversible phosphorylation of its threonine residues.

It localises to the plastid. The protein localises to the chloroplast thylakoid membrane. Its function is as follows. The light-harvesting complex (LHC) functions as a light receptor, it captures and delivers excitation energy to photosystems with which it is closely associated. This Amphidinium carterae (Dinoflagellate) protein is Caroteno-chlorophyll a-c-binding protein.